A 205-amino-acid polypeptide reads, in one-letter code: Small ribosomal subunit protein uS4 (205 aa).

The disordered stretch occupies residues 18 to 46 (NIWGRPKSPVNRREYGPGQHGQRRKGKLS). The S4 RNA-binding domain occupies 94-154 (RRLDTVVFRA…EASKQLAVVL (61 aa)).

Belongs to the universal ribosomal protein uS4 family. Part of the 30S ribosomal subunit. Contacts protein S5. The interaction surface between S4 and S5 is involved in control of translational fidelity.

In terms of biological role, one of the primary rRNA binding proteins, it binds directly to 16S rRNA where it nucleates assembly of the body of the 30S subunit. Functionally, with S5 and S12 plays an important role in translational accuracy. This Bradyrhizobium sp. (strain ORS 278) protein is Small ribosomal subunit protein uS4.